Consider the following 1028-residue polypeptide: Beta-galactosidase (1028 aa).

Residues Asn-104 and Asp-203 each contribute to the substrate site. Asp-203 provides a ligand contact to Na(+). Residues Glu-418, His-420, and Glu-463 each coordinate Mg(2+). Substrate contacts are provided by residues Glu-463 and 539 to 542 (EYAH). Glu-463 (proton donor) is an active-site residue. The active-site Nucleophile is the Glu-539. Asn-599 is a Mg(2+) binding site. 2 residues coordinate Na(+): Phe-603 and Asn-606. Residues Asn-606 and Trp-1004 each coordinate substrate.

It belongs to the glycosyl hydrolase 2 family. As to quaternary structure, homodimer. The cofactor is Mg(2+). It depends on Mn(2+) as a cofactor. Fe cation serves as cofactor. Requires Na(+) as cofactor. K(+) is required as a cofactor.

The catalysed reaction is Hydrolysis of terminal non-reducing beta-D-galactose residues in beta-D-galactosides.. Completely inhibited by Hg(2+), Cu(2+) Ag(2+), and partially inhibited by Zn(2+), imidazole and EDTA. Activated by Ca(2+), Co(2+), Ni(2+). This beta-galactosidase is also able to catalyze glycosyl transfer to a series of acceptors, including hexose, pentose, beta- or alpha-disaccharides, hexahydroxy alcohol, cyclitol, and aromatic glycosides, resulting in the production of galacto-oligosaccharides (GOS). This is Beta-galactosidase (lacZ) from Enterobacter agglomerans (Erwinia herbicola).